We begin with the raw amino-acid sequence, 303 residues long: HTH-type transcriptional regulator LysG (303 aa).

One can recognise an HTH lysR-type domain in the interval 6–62; the sequence is LDGPQLAALAAVVELGSFDAAAERLHVTPSAVSQRIKSLEQQVGQVLVVREKPCRAT. The H-T-H motif DNA-binding region spans 23–42; that stretch reads FDAAAERLHVTPSAVSQRIK.

This sequence belongs to the LysR transcriptional regulatory family. Homodimer.

In terms of biological role, positively regulates the expression of the exporter LysE and represses its own expression. The polypeptide is HTH-type transcriptional regulator LysG (Mycobacterium bovis (strain ATCC BAA-935 / AF2122/97)).